The chain runs to 367 residues: D-alanine--D-alanine ligase (367 aa).

An ATP-grasp domain is found at 145-351 (KRLLRDAGLP…QPALMDALIA (207 aa)). 174 to 229 (HAVGCSELFIKPANLGSSVGISKARTPQEFAAACDLALRFDGKILIERCISPVREI) is a binding site for ATP. Residues Asp306, Glu318, and Asn320 each contribute to the Mg(2+) site.

It belongs to the D-alanine--D-alanine ligase family. Mg(2+) is required as a cofactor. Mn(2+) serves as cofactor.

The protein localises to the cytoplasm. It carries out the reaction 2 D-alanine + ATP = D-alanyl-D-alanine + ADP + phosphate + H(+). It functions in the pathway cell wall biogenesis; peptidoglycan biosynthesis. Functionally, cell wall formation. The chain is D-alanine--D-alanine ligase from Bradyrhizobium sp. (strain BTAi1 / ATCC BAA-1182).